The following is an 891-amino-acid chain: Alanine--tRNA ligase (891 aa).

Residues His-564, His-568, Cys-678, and His-682 each coordinate Zn(2+).

It belongs to the class-II aminoacyl-tRNA synthetase family. The cofactor is Zn(2+).

The protein localises to the cytoplasm. The enzyme catalyses tRNA(Ala) + L-alanine + ATP = L-alanyl-tRNA(Ala) + AMP + diphosphate. Functionally, catalyzes the attachment of alanine to tRNA(Ala) in a two-step reaction: alanine is first activated by ATP to form Ala-AMP and then transferred to the acceptor end of tRNA(Ala). Also edits incorrectly charged Ser-tRNA(Ala) and Gly-tRNA(Ala) via its editing domain. The polypeptide is Alanine--tRNA ligase (Nitrobacter hamburgensis (strain DSM 10229 / NCIMB 13809 / X14)).